We begin with the raw amino-acid sequence, 295 residues long: Putative NADH-ubiquinone oxidoreductase MJ0520 (295 aa).

Helical transmembrane passes span 8–28 (LIGAINLTIHAFLVGSLLLGL), 69–89 (LYIFVALLDIAIWLAALIIAI), 129–149 (VFSAAAEVPLFAVVAAIYLTT), 163–183 (IHGSLLFKMPICAFAFFILLV), 199–219 (IVSGYMTEHYGLLGAIIYIAE), 220–240 (AIAYFVLLWLFIAVFIGPLVI), 243–263 (PVLTLAVMVVMTVILAFVNGL), and 273–293 (VMLQMTIAGLVLCDVLYRLIV).

This sequence belongs to the complex I subunit 1 family.

The protein localises to the cell membrane. The enzyme catalyses a ubiquinone + NADH + 5 H(+)(in) = a ubiquinol + NAD(+) + 4 H(+)(out). This chain is Putative NADH-ubiquinone oxidoreductase MJ0520, found in Methanocaldococcus jannaschii (strain ATCC 43067 / DSM 2661 / JAL-1 / JCM 10045 / NBRC 100440) (Methanococcus jannaschii).